Here is a 682-residue protein sequence, read N- to C-terminus: Serine/threonine-protein kinase PAK 6 (682 aa).

Disordered stretches follow at residues 1 to 30, 132 to 170, 200 to 256, and 270 to 367; these read MFRK…DPKE, SPQS…QALP, LQSS…QESS, and PATG…NLYL. In terms of domain architecture, CRIB spans 12–25; the sequence is ISAPQNFQHRVHTS. A linker region spans residues 26-407; it reads FDPKEGKFVG…VVDQGDPRLL (382 aa). Polar residues-rich tracts occupy residues 270 to 279 and 297 to 334; these read PATGAASSSK and KDSS…QKSL. Residues 408–659 enclose the Protein kinase domain; sequence LDSYVKIGEG…AQELLDHPFL (252 aa). Residues 414–422 and K437 each bind ATP; that span reads IGEGSTGIV. The active-site Proton acceptor is D527. S561 is subject to Phosphoserine; by autocatalysis.

Belongs to the protein kinase superfamily. STE Ser/Thr protein kinase family. STE20 subfamily. In terms of assembly, interacts tightly with GTP-bound but not GDP-bound CDC42/p21 and RAC1. Interacts with the androgen receptor AR. Interacts with IQGAP1 and PPM1B. In terms of processing, autophosphorylated. Phosphorylated by MAP2K6/MAPKK6, leading to PAK6 activation.

The protein resides in the cytoplasm. It is found in the nucleus. It carries out the reaction L-seryl-[protein] + ATP = O-phospho-L-seryl-[protein] + ADP + H(+). The enzyme catalyses L-threonyl-[protein] + ATP = O-phospho-L-threonyl-[protein] + ADP + H(+). In terms of biological role, serine/threonine protein kinase that plays a role in the regulation of gene transcription. The kinase activity is induced by various effectors including AR or MAP2K6/MAPKK6. Phosphorylates the DNA-binding domain of androgen receptor/AR and thereby inhibits AR-mediated transcription. Also inhibits ESR1-mediated transcription. May play a role in cytoskeleton regulation by interacting with IQGAP1. May protect cells from apoptosis through phosphorylation of BAD. In Mus musculus (Mouse), this protein is Serine/threonine-protein kinase PAK 6 (Pak6).